Consider the following 650-residue polypeptide: L-aspartate N-monooxygenase (nitrosuccinate-forming) (650 aa).

The protein belongs to the nitrosuccinic acid synthase family. FAD is required as a cofactor.

It carries out the reaction L-aspartate + 3 NADPH + 3 O2 + 2 H(+) = 2-nitrobutanedioate + 3 NADP(+) + 4 H2O. In terms of biological role, involved in the biosynthesis of desferrioxamine derivatives which have iron-binding properties and may act as siderophores. Catalyzes the iterative oxidation of L-aspartic acid to nitrosuccinic acid (2-nitrobutanedioate) via N-hydroxyaspartic acid and nitrososuccinic acid. In Streptomyces davaonensis (strain DSM 101723 / JCM 4913 / KCC S-0913 / 768), this protein is L-aspartate N-monooxygenase (nitrosuccinate-forming).